We begin with the raw amino-acid sequence, 81 residues long: MAITKTSATFVLLIILAASLSNFNVLASDIKPTGRIDNQCKRMCSATYGNGKCAADCRSDGFSSGQCFTSPPFDNRCCCNN.

The signal sequence occupies residues 1-27 (MAITKTSATFVLLIILAASLSNFNVLA). Disulfide bonds link Cys-40–Cys-79, Cys-44–Cys-67, Cys-53–Cys-77, and Cys-57–Cys-78.

It belongs to the DEFL family.

Its subcellular location is the secreted. This is Defensin-like protein 45 from Arabidopsis thaliana (Mouse-ear cress).